A 321-amino-acid polypeptide reads, in one-letter code: Aspartate carbamoyltransferase catalytic subunit (321 aa).

Carbamoyl phosphate contacts are provided by Arg-65 and Thr-66. Lys-93 contacts L-aspartate. Carbamoyl phosphate is bound by residues Arg-115, His-143, and Gln-146. L-aspartate contacts are provided by Arg-176 and Arg-230. The carbamoyl phosphate site is built by Gly-271 and Pro-272.

Belongs to the aspartate/ornithine carbamoyltransferase superfamily. ATCase family. As to quaternary structure, heterododecamer (2C3:3R2) of six catalytic PyrB chains organized as two trimers (C3), and six regulatory PyrI chains organized as three dimers (R2).

The enzyme catalyses carbamoyl phosphate + L-aspartate = N-carbamoyl-L-aspartate + phosphate + H(+). It functions in the pathway pyrimidine metabolism; UMP biosynthesis via de novo pathway; (S)-dihydroorotate from bicarbonate: step 2/3. Functionally, catalyzes the condensation of carbamoyl phosphate and aspartate to form carbamoyl aspartate and inorganic phosphate, the committed step in the de novo pyrimidine nucleotide biosynthesis pathway. This chain is Aspartate carbamoyltransferase catalytic subunit, found in Bartonella quintana (strain Toulouse) (Rochalimaea quintana).